Consider the following 242-residue polypeptide: Probable septum site-determining protein MinC (242 aa).

Belongs to the MinC family. In terms of assembly, interacts with MinD and FtsZ.

In terms of biological role, cell division inhibitor that blocks the formation of polar Z ring septums. Rapidly oscillates between the poles of the cell to destabilize FtsZ filaments that have formed before they mature into polar Z rings. Prevents FtsZ polymerization. This Agrobacterium fabrum (strain C58 / ATCC 33970) (Agrobacterium tumefaciens (strain C58)) protein is Probable septum site-determining protein MinC.